The chain runs to 503 residues: Glucosaminyl-phosphatidylinositol-acyltransferase PIGW (503 aa).

Residues 1 to 21 (MSQKQMKEAFVSNQNGTSVLE) lie on the Lumenal side of the membrane. An N-linked (GlcNAc...) asparagine glycan is attached at N15. The helical transmembrane segment at 22–42 (ITEGLCLPALCILCRGLLIIL) threads the bilayer. The Cytoplasmic portion of the chain corresponds to 43 to 56 (SQQLCSSLHNSRTR). Residues 57 to 75 (FLVDFAFLIVPLVTTLTIF) form a helical membrane-spanning segment. The Lumenal segment spans residues 76-78 (SSF). A helical membrane pass occupies residues 79-98 (VLLEYLVAIILGAGLLYEIY). Residues 99 to 131 (CRRTCYARMPFQKICEKFLKVSLESEHIPAISC) are Cytoplasmic-facing. A helical transmembrane segment spans residues 132-152 (FRVVNSAFTAVAILAVDFPLF). The Lumenal portion of the chain corresponds to 153–160 (PRRYAKTE). The chain crosses the membrane as a helical span at residues 161–181 (LYGTGAMDYGVGGFIFGSAMV). The Cytoplasmic portion of the chain corresponds to 182–201 (SPEVRRKYTKGSRFCYLTKS). Residues 202–222 (LYSLWPLVFLGVGRLVAIKSV) form a helical membrane-spanning segment. The Lumenal segment spans residues 223-236 (DYQEHLTEYGVHWN). The helical transmembrane segment at 237-257 (FFFTLIAVKLITSLLLLICPL) threads the bilayer. Residues 258 to 259 (NR) lie on the Cytoplasmic side of the membrane. Residues 260–280 (SWVVAISIAALYQLALDFTPL) form a helical membrane-spanning segment. The Lumenal segment spans residues 281 to 304 (KSLILYGTDGSGTRVGLLNANREG). The helical transmembrane segment at 305–325 (IISVLGYVAVHMAGVQTGLYV) threads the bilayer. Residues 326–337 (LKKRSHIKDWIK) lie on the Cytoplasmic side of the membrane. A helical membrane pass occupies residues 338–358 (VACCILLTAIGLFISLYIVQV). Residues 359–369 (NVEVASRRMAN) lie on the Lumenal side of the membrane. A helical membrane pass occupies residues 370 to 390 (LAFCIWIVASCLILLSSLLLG). Residues 391 to 447 (DIILSFAKFVIKEAAVPCSWKLIQSPTANKKHLESIVFDAKRKEPTLCLITAMNRNQ) are Cytoplasmic-facing. At S415 the chain carries Phosphoserine. Residues 448–468 (LLFFLLSNVTTGLVNLSIDTL) traverse the membrane as a helical segment. Residues 469–472 (HSST) lie on the Lumenal side of the membrane. A helical membrane pass occupies residues 473–493 (PWALCLLNLYMFTNCLIIYVL). The Cytoplasmic portion of the chain corresponds to 494 to 503 (HLQDKTIKFW).

Belongs to the PIGW family.

The protein localises to the endoplasmic reticulum membrane. The protein operates within glycolipid biosynthesis; glycosylphosphatidylinositol-anchor biosynthesis. In terms of biological role, acyltransferase that catalyzes the acyl transfer from an acyl-CoA at the 2-OH position of the inositol ring of glucosaminyl phosphatidylinositol (GlcN-PI) to generate glucosaminyl acyl phosphatidylinositol (GlcN-(acyl)PI) and participates in the fourth step of GPI-anchor biosynthesis. Required for the transport of GPI-anchored proteins to the plasma membrane. Acetylation during GPI-anchor biosynthesis is not essential for the subsequent mannosylation and is usually removed soon after the attachment of GPIs to proteins. The polypeptide is Glucosaminyl-phosphatidylinositol-acyltransferase PIGW (Bos taurus (Bovine)).